A 338-amino-acid polypeptide reads, in one-letter code: DNA-directed RNA polymerase subunit alpha (338 aa).

The interval 1–225 (MLISQRPTLT…ELFGLARELN (225 aa)) is alpha N-terminal domain (alpha-NTD). The tract at residues 242–338 (YIAAYGMPIE…YIDTDPEETE (97 aa)) is alpha C-terminal domain (alpha-CTD). The tract at residues 314-338 (FDPTQLDGYDAATGDYIDTDPEETE) is disordered.

It belongs to the RNA polymerase alpha chain family. As to quaternary structure, homodimer. The RNAP catalytic core consists of 2 alpha, 1 beta, 1 beta' and 1 omega subunit. When a sigma factor is associated with the core the holoenzyme is formed, which can initiate transcription.

The enzyme catalyses RNA(n) + a ribonucleoside 5'-triphosphate = RNA(n+1) + diphosphate. In terms of biological role, DNA-dependent RNA polymerase catalyzes the transcription of DNA into RNA using the four ribonucleoside triphosphates as substrates. The sequence is that of DNA-directed RNA polymerase subunit alpha from Corynebacterium diphtheriae (strain ATCC 700971 / NCTC 13129 / Biotype gravis).